We begin with the raw amino-acid sequence, 382 residues long: Gap junction alpha-1 protein (382 aa).

Topologically, residues 2 to 23 (GDWSALGKLLDKVQAYSTAGGK) are cytoplasmic. Ser-5 carries the phosphoserine modification. The chain crosses the membrane as a helical span at residues 24–44 (VWLSVLFIFRILLLGTAVESA). Topologically, residues 45-76 (WGDEQSAFRCNTQQPGCENVCYDKSFPISHVR) are extracellular. 2 disulfides stabilise this stretch: Cys-54/Cys-192 and Cys-187/Cys-198. A helical membrane pass occupies residues 77 to 97 (FWVLQIIFVSVPTLLYLAHVF). The Cytoplasmic portion of the chain corresponds to 98 to 155 (YVMRKEEKLNKKEEELKVAQTDGVNVEMHLKQIEIKKFKYGIEEHGKVKMRGGLLRTY). Residue Lys-144 forms a Glycyl lysine isopeptide (Lys-Gly) (interchain with G-Cter in SUMO) linkage. A helical membrane pass occupies residues 156–176 (IISILFKSIFEVAFLLIQWYI). Residues 177 to 207 (YGFSLSAVYTCKRDPCPHQVDCFLSRPTEKT) lie on the Extracellular side of the membrane. A helical membrane pass occupies residues 208-228 (IFIIFMLVVSLVSLALNIIEL). Over 229–382 (FYVFFKGVKD…SRPRPDDLEI (154 aa)) the chain is Cytoplasmic. Lys-237 participates in a covalent cross-link: Glycyl lysine isopeptide (Lys-Gly) (interchain with G-Cter in SUMO). Positions 244-382 (SDPYHTTSGA…SRPRPDDLEI (139 aa)) are interaction with NOV. Tyr-247 carries the phosphotyrosine modification. Ser-255 and Ser-262 each carry phosphoserine. The tract at residues 264–382 (KYAYFNGCSS…SRPRPDDLEI (119 aa)) is interaction with UBQLN4. Cys-271 is subject to S-nitrosocysteine. Residue Thr-275 is modified to Phosphothreonine. Phosphoserine occurs at positions 306 and 314. Residues 317–332 (QNRMGQAGSTISNSHA) are compositionally biased toward polar residues. The disordered stretch occupies residues 317–382 (QNRMGQAGST…SRPRPDDLEI (66 aa)). At Ser-325 the chain carries Phosphoserine; by CK1. Residue Thr-326 is modified to Phosphothreonine. 2 positions are modified to phosphoserine; by CK1: Ser-328 and Ser-330. Ser-344 and Ser-365 each carry phosphoserine. Residues 362–374 (RPSSRASSRASSR) are compositionally biased toward low complexity. Ser-368 is subject to Phosphoserine; by PKC/PRKCG and PKC/PRKCD. Residues Ser-369 and Ser-373 each carry the phosphoserine modification.

The protein belongs to the connexin family. Alpha-type (group II) subfamily. A connexon is composed of a hexamer of connexins. Interacts with SGSM3. Interacts with RIC1/CIP150. Interacts with CNST and CSNK1D. Interacts (via C-terminus) with TJP1. Interacts (via C-terminus) with SRC (via SH3 domain). Interacts (not ubiquitinated) with UBQLN4 (via UBA domain). Interacts with NOV. Interacts with TMEM65. Interacts with ANK3/ANKG and PKP2. Post-translationally, phosphorylation at Ser-325, Ser-328 and Ser-330 by CK1 modulates gap junction assembly. Phosphorylated at Ser-368 by PRKCG; phosphorylation induces disassembly of gap junction plaques and inhibition of gap junction activity. Phosphorylation at Ser-368 by PRKCD triggers its internalization into small vesicles leading to proteasome-mediated degradation. Sumoylated with SUMO1, SUMO2 and SUMO3, which may regulate the level of functional Cx43 gap junctions at the plasma membrane. May be desumoylated by SENP1 or SENP2. In terms of processing, S-nitrosylation at Cys-271 is enriched at the muscle endothelial gap junction in arteries, it augments channel permeability and may regulate of smooth muscle cell to endothelial cell communication. Post-translationally, acetylated in the developing cortex; leading to delocalization from the cell membrane.

The protein localises to the cell membrane. The protein resides in the cell junction. It localises to the gap junction. Its subcellular location is the endoplasmic reticulum. Gap junction protein that acts as a regulator of bladder capacity. A gap junction consists of a cluster of closely packed pairs of transmembrane channels, the connexons, through which materials of low MW diffuse from one cell to a neighboring cell. May play a critical role in the physiology of hearing by participating in the recycling of potassium to the cochlear endolymph. Negative regulator of bladder functional capacity: acts by enhancing intercellular electrical and chemical transmission, thus sensitizing bladder muscles to cholinergic neural stimuli and causing them to contract. May play a role in cell growth inhibition through the regulation of NOV expression and localization. Plays an essential role in gap junction communication in the ventricles. In Chlorocebus aethiops (Green monkey), this protein is Gap junction alpha-1 protein (GJA1).